The sequence spans 261 residues: Carbonic anhydrase 1 (261 aa).

A disordered region spans residues Met-1–Pro-31. Ala-2 carries the post-translational modification N-acetylalanine. Residues Pro-4–Phe-261 enclose the Alpha-carbonic anhydrase domain. Residue His-65 is the Proton donor/acceptor of the active site. 3 residues coordinate Zn(2+): His-95, His-97, and His-120. Substrate is bound by residues Thr-200 and Thr-200–His-201. Residues Val-240–Phe-261 are disordered.

This sequence belongs to the alpha-carbonic anhydrase family. Zn(2+) is required as a cofactor.

It localises to the cytoplasm. It carries out the reaction hydrogencarbonate + H(+) = CO2 + H2O. It catalyses the reaction urea = cyanamide + H2O. With respect to regulation, inhibited by acetazolamide. Functionally, catalyzes the reversible hydration of carbon dioxide. Can hydrate cyanamide to urea. The chain is Carbonic anhydrase 1 (CA1) from Gorilla gorilla gorilla (Western lowland gorilla).